The primary structure comprises 612 residues: UPF0329 protein ECU05_1680/ECU11_0050 (612 aa).

The span at 304–330 (RQRREMEKKEEEKKKEEEKKKEEEKRK) shows a compositional bias: basic and acidic residues. The segment at 304–424 (RQRREMEKKE…RKRYKIHRRV (121 aa)) is disordered. The span at 331-349 (EEKKKKKEEKKEEKKKKKE) shows a compositional bias: basic residues. A compositionally biased stretch (basic and acidic residues) spans 350–388 (EKKEEKKEEKKEEKKEEKKEEKKEEKKEEKSGKSLREGE).

This sequence belongs to the UPF0329 family.

This Encephalitozoon cuniculi (strain GB-M1) (Microsporidian parasite) protein is UPF0329 protein ECU05_1680/ECU11_0050.